Here is a 287-residue protein sequence, read N- to C-terminus: Pyridoxal 5'-phosphate synthase subunit PdxS (287 aa).

Residue aspartate 21 coordinates D-ribose 5-phosphate. Lysine 78 acts as the Schiff-base intermediate with D-ribose 5-phosphate in catalysis. Residue glycine 150 coordinates D-ribose 5-phosphate. Arginine 162 provides a ligand contact to D-glyceraldehyde 3-phosphate. D-ribose 5-phosphate contacts are provided by residues glycine 211 and 232 to 233 (GS).

Belongs to the PdxS/SNZ family. As to quaternary structure, in the presence of PdxT, forms a dodecamer of heterodimers.

It carries out the reaction aldehydo-D-ribose 5-phosphate + D-glyceraldehyde 3-phosphate + L-glutamine = pyridoxal 5'-phosphate + L-glutamate + phosphate + 3 H2O + H(+). It participates in cofactor biosynthesis; pyridoxal 5'-phosphate biosynthesis. Functionally, catalyzes the formation of pyridoxal 5'-phosphate from ribose 5-phosphate (RBP), glyceraldehyde 3-phosphate (G3P) and ammonia. The ammonia is provided by the PdxT subunit. Can also use ribulose 5-phosphate and dihydroxyacetone phosphate as substrates, resulting from enzyme-catalyzed isomerization of RBP and G3P, respectively. The polypeptide is Pyridoxal 5'-phosphate synthase subunit PdxS (Francisella tularensis subsp. tularensis (strain FSC 198)).